A 222-amino-acid chain; its full sequence is Cytochrome b6 (222 aa).

The helical transmembrane segment at 39 to 59 (IFYCLGGITLVCFIIQFATGF) threads the bilayer. Cys42 is a heme c binding site. Residues His93 and His107 each coordinate heme b. 3 helical membrane passes run 97-117 (ASMM…TGGF), 123-143 (LTWM…VTGY), and 193-213 (LHTF…FLMI). Residues His194 and His209 each coordinate heme b.

The protein belongs to the cytochrome b family. PetB subfamily. The 4 large subunits of the cytochrome b6-f complex are cytochrome b6, subunit IV (17 kDa polypeptide, PetD), cytochrome f and the Rieske protein, while the 4 small subunits are PetG, PetL, PetM and PetN. The complex functions as a dimer. The cofactor is heme b. Requires heme c as cofactor.

It localises to the cellular thylakoid membrane. Functionally, component of the cytochrome b6-f complex, which mediates electron transfer between photosystem II (PSII) and photosystem I (PSI), cyclic electron flow around PSI, and state transitions. This Rippkaea orientalis (strain PCC 8801 / RF-1) (Cyanothece sp. (strain PCC 8801)) protein is Cytochrome b6.